A 710-amino-acid polypeptide reads, in one-letter code: Prolyl endopeptidase (710 aa).

Met-1 bears the N-acetylmethionine mark. Lys-157 bears the N6-acetyllysine mark. Residues Ser-554, Asp-641, and His-680 each act as charge relay system in the active site.

It belongs to the peptidase S9A family.

The protein resides in the cytoplasm. It catalyses the reaction Hydrolysis of Pro-|-Xaa &gt;&gt; Ala-|-Xaa in oligopeptides.. Functionally, cleaves peptide bonds on the C-terminal side of prolyl residues within peptides that are up to approximately 30 amino acids long. This chain is Prolyl endopeptidase (Prep), found in Mus musculus (Mouse).